Here is a 290-residue protein sequence, read N- to C-terminus: Membrane-spanning 4-domains subfamily A member 8 (290 aa).

Residues 1–21 show a composition bias toward polar residues; that stretch reads MNRPTAQGAVNLSGSKFSTAK. Positions 1–25 are disordered; the sequence is MNRPTAQGAVNLSGSKFSTAKSWEP. The Cytoplasmic portion of the chain corresponds to 1 to 108; the sequence is MNRPTAQGAV…PAQRVLKKGQ (108 aa). Residues 109 to 129 form a helical membrane-spanning segment; the sequence is VLGAIQILIGLVHIGLGSIMI. The Extracellular segment spans residues 130–138; it reads TNLFSHYTP. Residues 139–159 traverse the membrane as a helical segment; sequence VSLYGGFPFWGGIWFIISGSL. The Cytoplasmic segment spans residues 160 to 174; the sequence is SVAAETQPNSPCLLN. Residues 175 to 195 form a helical membrane-spanning segment; the sequence is GSVGLNIFSAICSAVGIMLFI. The Extracellular segment spans residues 196-220; that stretch reads TDISISSGYIYPSYYPYQENLGVRT. Residues 221–241 form a helical membrane-spanning segment; sequence GVAISSVLLIFCLLELSIASV. The Cytoplasmic portion of the chain corresponds to 242–290; that stretch reads SSHFGCQVACCHYNNPGVVIPNVYAANPVVIPEPPNPIPSYSEVVQDSR.

The protein belongs to the MS4A family. As to expression, expressed strongly in intestine and colon and minimally in lung and ovary.

It is found in the membrane. Functionally, may be involved in signal transduction as a component of a multimeric receptor complex. The chain is Membrane-spanning 4-domains subfamily A member 8 (Ms4a8) from Mus musculus (Mouse).